The primary structure comprises 495 residues: Probable cytosol aminopeptidase (495 aa).

Mn(2+)-binding residues include Lys266 and Asp271. Lys278 is a catalytic residue. Mn(2+)-binding residues include Asp289, Asp348, and Glu350. Arg352 is a catalytic residue.

It belongs to the peptidase M17 family. Mn(2+) is required as a cofactor.

The protein resides in the cytoplasm. It carries out the reaction Release of an N-terminal amino acid, Xaa-|-Yaa-, in which Xaa is preferably Leu, but may be other amino acids including Pro although not Arg or Lys, and Yaa may be Pro. Amino acid amides and methyl esters are also readily hydrolyzed, but rates on arylamides are exceedingly low.. The enzyme catalyses Release of an N-terminal amino acid, preferentially leucine, but not glutamic or aspartic acids.. Its function is as follows. Presumably involved in the processing and regular turnover of intracellular proteins. Catalyzes the removal of unsubstituted N-terminal amino acids from various peptides. This is Probable cytosol aminopeptidase from Pseudomonas aeruginosa (strain LESB58).